The chain runs to 466 residues: Cysteine--tRNA ligase (466 aa).

Position 28 (cysteine 28) interacts with Zn(2+). The 'HIGH' region signature appears at 30–40 (PTVYNYIHIGN). Zn(2+)-binding residues include cysteine 208, histidine 233, and glutamate 237. The 'KMSKS' region signature appears at 265-269 (KMSKS). Residue lysine 268 participates in ATP binding.

Belongs to the class-I aminoacyl-tRNA synthetase family. Monomer. The cofactor is Zn(2+).

The protein resides in the cytoplasm. It catalyses the reaction tRNA(Cys) + L-cysteine + ATP = L-cysteinyl-tRNA(Cys) + AMP + diphosphate. This Staphylococcus carnosus (strain TM300) protein is Cysteine--tRNA ligase.